Here is a 113-residue protein sequence, read N- to C-terminus: U11-theraphotoxin-Hhn1a (113 aa).

The first 21 residues, 1–21 (MNTVRVTFLLVFVLAVSLGQA), serve as a signal peptide directing secretion. The propeptide occupies 22-74 (DKDENRMEMQEKTEQGKGYLDFAENLLPQKLEELEAKLLEEDSEESRNSRQKR). The span at 59–69 (LLEEDSEESRN) shows a compositional bias: basic and acidic residues. The tract at residues 59–83 (LLEEDSEESRNSRQKRCIGEGVPCD) is disordered. Intrachain disulfides connect Cys-75/Cys-90, Cys-82/Cys-95, and Cys-89/Cys-110.

This sequence belongs to the neurotoxin 14 (magi-1) family. 01 (HNTX-16) subfamily. As to expression, expressed by the venom gland.

It localises to the secreted. Its function is as follows. Probable ion channel inhibitor. This is U11-theraphotoxin-Hhn1a from Cyriopagopus hainanus (Chinese bird spider).